A 465-amino-acid polypeptide reads, in one-letter code: Methionine aminopeptidase 2-2 (465 aa).

Residues 1–13 are compositionally biased toward basic and acidic residues; the sequence is MGSKTPNDHRRGP. Positions 1–92 are disordered; the sequence is MGSKTPNDHR…KKKTLLGGLQ (92 aa). Residues 44 to 55 are compositionally biased toward acidic residues; the sequence is GETEDGEDEDDD. The segment covering 71-86 has biased composition (basic residues); it reads TKKKNKRKKNKKKKKT. Histidine 217 is a binding site for substrate. 3 residues coordinate a divalent metal cation: aspartate 238, aspartate 249, and histidine 318. Position 326 (histidine 326) interacts with substrate. 2 residues coordinate a divalent metal cation: glutamate 351 and glutamate 446.

It belongs to the peptidase M24A family. Methionine aminopeptidase eukaryotic type 2 subfamily. It depends on Co(2+) as a cofactor. Zn(2+) is required as a cofactor. Mn(2+) serves as cofactor. The cofactor is Fe(2+).

It localises to the cytoplasm. The enzyme catalyses Release of N-terminal amino acids, preferentially methionine, from peptides and arylamides.. In terms of biological role, cotranslationally removes the N-terminal methionine from nascent proteins. The N-terminal methionine is often cleaved when the second residue in the primary sequence is small and uncharged (Met-Ala-, Cys, Gly, Pro, Ser, Thr, or Val). This is Methionine aminopeptidase 2-2 from Blastomyces gilchristii (strain SLH14081) (Blastomyces dermatitidis).